Reading from the N-terminus, the 158-residue chain is NAD(P)H-quinone oxidoreductase subunit J, chloroplastic (158 aa).

It belongs to the complex I 30 kDa subunit family. NDH is composed of at least 16 different subunits, 5 of which are encoded in the nucleus.

The protein localises to the plastid. It localises to the chloroplast thylakoid membrane. The catalysed reaction is a plastoquinone + NADH + (n+1) H(+)(in) = a plastoquinol + NAD(+) + n H(+)(out). It carries out the reaction a plastoquinone + NADPH + (n+1) H(+)(in) = a plastoquinol + NADP(+) + n H(+)(out). NDH shuttles electrons from NAD(P)H:plastoquinone, via FMN and iron-sulfur (Fe-S) centers, to quinones in the photosynthetic chain and possibly in a chloroplast respiratory chain. The immediate electron acceptor for the enzyme in this species is believed to be plastoquinone. Couples the redox reaction to proton translocation, and thus conserves the redox energy in a proton gradient. This Dioscorea elephantipes (Elephant's foot yam) protein is NAD(P)H-quinone oxidoreductase subunit J, chloroplastic.